We begin with the raw amino-acid sequence, 327 residues long: MGATGDTGGPRPGTESRRPGNVGNAGAAGQPVLTNPWNIMIKPRQVQRRGRRSQMTTSFTDPAISMDLLRAVLQPSINEEIQSVFNKYMKFFQKAALNVRDNVGEEVDAEQLIQEACRSCVEQAKLLFSDGEKVIPRLAHELPGIKRGRQAEEESHREAPFPKRGKVGLPGHVLSNDRAAAGMVWKPKSCEPIRREGPKWDPARLNESTTFVLGSRANKALGMGGTRGRIYIKHPHLFKYAADPQDKHWLAEQHHMRATGGKMAYLLIEEDIRDLAASDDYRGCLDLKLEELKSFVLPSWMVEKMRKYMETLRTENEHRAAEATPQT.

Residues 1–11 (MGATGDTGGPR) show a composition bias toward gly residues. 2 disordered regions span residues 1 to 34 (MGAT…PVLT) and 146 to 172 (KRGR…LPGH). Residues 55–146 (MTTSFTDPAI…RLAHELPGIK (92 aa)) form an important for dimerization region. A compositionally biased stretch (basic and acidic residues) spans 146–161 (KRGRQAEEESHREAPF). The segment at residues 157 to 171 (REAPFPKRGKVGLPG) is a DNA-binding region (a.T hook). A Nuclear localization signal motif is present at residues 162-168 (PKRGKVG). Positions 195-314 (REGPKWDPAR…MRKYMETLRT (120 aa)) are important for DNA and nucleosome binding. The segment at residues 214-235 (GSRANKALGMGGTRGRIYIKHP) is a DNA-binding region (H-T-H motif).

Monomer and homodimer. A minor proportion may form homotrimers. Interacts with ZNF541. Interacts with the terminal deoxynucleotidyltransferase DNTT. Interacts with TRERF1. Identified in a histone deacetylase complex that contains DNTTIP1, HDAC1 and MIDEAS; this complex assembles into a tetramer that contains four copies of each protein chain. Component of a histone deacetylase complex containing DNTTIP1, ZNF541, HDAC1 and HDAC2. Identified in a complex with KCTD19, HDAC1, HDAC2 and ZNF541. As to expression, expressed in thymus, bone marrow and spleen.

The protein resides in the nucleus. Increases DNTT terminal deoxynucleotidyltransferase activity (in vitro). Also acts as a transcriptional regulator, binding to the consensus sequence 5'-GNTGCATG-3' following an AT-tract. Associates with RAB20 promoter and positively regulates its transcription. Binds DNA and nucleosomes; may recruit HDAC1 complexes to nucleosomes or naked DNA. The polypeptide is Deoxynucleotidyltransferase terminal-interacting protein 1 (Dnttip1) (Rattus norvegicus (Rat)).